A 792-amino-acid chain; its full sequence is Xaa-Pro dipeptidyl-peptidase (792 aa).

Active-site charge relay system residues include Ser-363, Asp-482, and His-513.

The protein belongs to the peptidase S15 family. Homodimer.

The protein localises to the cytoplasm. It catalyses the reaction Hydrolyzes Xaa-Pro-|- bonds to release unblocked, N-terminal dipeptides from substrates including Ala-Pro-|-p-nitroanilide and (sequentially) Tyr-Pro-|-Phe-Pro-|-Gly-Pro-|-Ile.. In terms of biological role, removes N-terminal dipeptides sequentially from polypeptides having unsubstituted N-termini provided that the penultimate residue is proline. This is Xaa-Pro dipeptidyl-peptidase from Lactobacillus delbrueckii subsp. bulgaricus (strain ATCC BAA-365 / Lb-18).